Reading from the N-terminus, the 237-residue chain is Purine nucleoside phosphorylase DeoD-type (237 aa).

A purine D-ribonucleoside is bound at residue histidine 4. Phosphate contacts are provided by residues glycine 20, arginine 24, arginine 43, and 87-90 (RVGT). A purine D-ribonucleoside-binding positions include 179 to 181 (EME) and 203 to 204 (SD). Residue aspartate 204 is the Proton donor of the active site.

This sequence belongs to the PNP/UDP phosphorylase family. As to quaternary structure, homohexamer; trimer of homodimers.

The enzyme catalyses a purine D-ribonucleoside + phosphate = a purine nucleobase + alpha-D-ribose 1-phosphate. It catalyses the reaction a purine 2'-deoxy-D-ribonucleoside + phosphate = a purine nucleobase + 2-deoxy-alpha-D-ribose 1-phosphate. Functionally, catalyzes the reversible phosphorolytic breakdown of the N-glycosidic bond in the beta-(deoxy)ribonucleoside molecules, with the formation of the corresponding free purine bases and pentose-1-phosphate. This chain is Purine nucleoside phosphorylase DeoD-type, found in Streptococcus pyogenes serotype M4 (strain MGAS10750).